A 265-amino-acid polypeptide reads, in one-letter code: Tryptophan synthase alpha chain (265 aa).

Active-site proton acceptor residues include E49 and E60.

This sequence belongs to the TrpA family. In terms of assembly, tetramer of two alpha and two beta chains.

The catalysed reaction is (1S,2R)-1-C-(indol-3-yl)glycerol 3-phosphate + L-serine = D-glyceraldehyde 3-phosphate + L-tryptophan + H2O. It participates in amino-acid biosynthesis; L-tryptophan biosynthesis; L-tryptophan from chorismate: step 5/5. The alpha subunit is responsible for the aldol cleavage of indoleglycerol phosphate to indole and glyceraldehyde 3-phosphate. The protein is Tryptophan synthase alpha chain of Herminiimonas arsenicoxydans.